Reading from the N-terminus, the 150-residue chain is Viral late gene transcription factor 2 (150 aa).

This sequence belongs to the chordopoxvirinae VLTF-2 family. Interacts with itself. Interacts with the late transcription factors VLTF-1.

In terms of biological role, acts with RNA polymerase to initiate transcription from late gene promoters. This Homo sapiens (Human) protein is Viral late gene transcription factor 2 (VLTF2).